The following is a 118-amino-acid chain: Large ribosomal subunit protein bL20 (118 aa).

The protein belongs to the bacterial ribosomal protein bL20 family.

Functionally, binds directly to 23S ribosomal RNA and is necessary for the in vitro assembly process of the 50S ribosomal subunit. It is not involved in the protein synthesizing functions of that subunit. The chain is Large ribosomal subunit protein bL20 from Acidiphilium cryptum (strain JF-5).